Here is a 448-residue protein sequence, read N- to C-terminus: Glutamate--tRNA ligase 1 (448 aa).

The 'HIGH' region signature appears at 9–19 (PSPTGKLHIGN). Positions 240–244 (KISKR) match the 'KMSKS' region motif. Lys-243 contacts ATP.

Belongs to the class-I aminoacyl-tRNA synthetase family. Glutamate--tRNA ligase type 1 subfamily. In terms of assembly, monomer.

Its subcellular location is the cytoplasm. It carries out the reaction tRNA(Glu) + L-glutamate + ATP = L-glutamyl-tRNA(Glu) + AMP + diphosphate. Functionally, catalyzes the attachment of glutamate to tRNA(Glu) in a two-step reaction: glutamate is first activated by ATP to form Glu-AMP and then transferred to the acceptor end of tRNA(Glu). This Orientia tsutsugamushi (strain Ikeda) (Rickettsia tsutsugamushi) protein is Glutamate--tRNA ligase 1.